Consider the following 120-residue polypeptide: Large ribosomal subunit protein eL18 (120 aa).

The protein belongs to the eukaryotic ribosomal protein eL18 family.

The chain is Large ribosomal subunit protein eL18 from Pyrococcus horikoshii (strain ATCC 700860 / DSM 12428 / JCM 9974 / NBRC 100139 / OT-3).